The sequence spans 516 residues: MDSPEKRIYIFDTTLRDGEQSPGSSMNPAEKLRIARQLEKMGVDIIEAGFPIASEGDFLSVQQIAQEIRGAQIAGLARANNADIDRAWEAIRDAANPRIHTFISSSDIHLKYQLRKSREQVLKEAVAAVERARSYTPNVEFSPMDATRTDRGYLCEMVEAVIAAGASTVNIPDTVGYAIPQEFGELIAYLRANVPNISQAIISVHCHNDLGLAVANSLSAILNGARQVECTINGIGERAGNTAMEEVVMALRTRKDLFGFYTGIKTESIYQSSRLLTQITGVAVQPNKAIVGANAFAHESGIHQDGLIKEKITYEIMTPQSVGISDSHIVLGKHSGRHAVSEHLKKLGFNLSDTELNKIFVRFKELADAKKNVFDEDLEAIVYEELYRVEDKYKLIYLNVVSGNVAIPTATMQMEVDREIVQDAGFGVGPVDATFDAIRKITGTNYDLLRYVVNAISGGTDAQGEVTVQLKFNGRSVVGHGADLDVIVASARAYINALNRLEFLKRDAGKIKSEYE.

The Pyruvate carboxyltransferase domain occupies 8–270 (IYIFDTTLRD…YTGIKTESIY (263 aa)). Residues Asp-17, His-205, His-207, and Asn-241 each contribute to the Mn(2+) site. Residues 394 to 516 (KLIYLNVVSG…DAGKIKSEYE (123 aa)) are regulatory domain.

Belongs to the alpha-IPM synthase/homocitrate synthase family. LeuA type 1 subfamily. In terms of assembly, homodimer. Mn(2+) serves as cofactor.

It is found in the cytoplasm. It catalyses the reaction 3-methyl-2-oxobutanoate + acetyl-CoA + H2O = (2S)-2-isopropylmalate + CoA + H(+). It participates in amino-acid biosynthesis; L-leucine biosynthesis; L-leucine from 3-methyl-2-oxobutanoate: step 1/4. In terms of biological role, catalyzes the condensation of the acetyl group of acetyl-CoA with 3-methyl-2-oxobutanoate (2-ketoisovalerate) to form 3-carboxy-3-hydroxy-4-methylpentanoate (2-isopropylmalate). The sequence is that of 2-isopropylmalate synthase from Syntrophus aciditrophicus (strain SB).